Reading from the N-terminus, the 666-residue chain is Protein translocase subunit SecA 2 (666 aa).

Residues Gln-119, 137–141 (GEGKS), and Asp-546 contribute to the ATP site.

The protein belongs to the SecA family. As to quaternary structure, monomer and homodimer. Part of the essential Sec protein translocation apparatus which comprises SecA, SecYEG and auxiliary proteins SecDF-YajC and YidC.

It is found in the cell inner membrane. The protein localises to the cytoplasm. It catalyses the reaction ATP + H2O + cellular proteinSide 1 = ADP + phosphate + cellular proteinSide 2.. Part of the Sec protein translocase complex. Interacts with the SecYEG preprotein conducting channel. Has a central role in coupling the hydrolysis of ATP to the transfer of proteins into and across the cell membrane, serving both as a receptor for the preprotein-SecB complex and as an ATP-driven molecular motor driving the stepwise translocation of polypeptide chains across the membrane. This is Protein translocase subunit SecA 2 from Nitrosospira multiformis (strain ATCC 25196 / NCIMB 11849 / C 71).